Consider the following 129-residue polypeptide: Defensin-like protein 182 (129 aa).

Residues M1–G26 form the signal peptide. 8 disulfides stabilise this stretch: C29–C70, C36–C55, C39–C64, C43–C66, C83–C129, C94–C114, C99–C123, and C103–C125.

The protein belongs to the DEFL family.

The protein localises to the secreted. In terms of biological role, confers broad-spectrum resistance to pathogens. The sequence is that of Defensin-like protein 182 (PDF3.2) from Arabidopsis thaliana (Mouse-ear cress).